Consider the following 129-residue polypeptide: M-zodatoxin-Lt8d (129 aa).

Residues 1–20 (MKYFVVALALVAAFACIAES) form the signal peptide. Positions 21 to 60 (KPAESEHELAEVEEENELADLEDAVWLEHLADLSDLEEAR) are excised as a propeptide. A Processing quadruplet motif motif is present at residues 57 to 60 (EEAR).

Cleavage of the propeptide depends on the processing quadruplet motif (XXXR, with at least one of X being E). In terms of tissue distribution, expressed by the venom gland.

The protein localises to the secreted. Functionally, insecticidal, cytolytic and antimicrobial peptide. Forms voltage-dependent, ion-permeable channels in membranes. At high concentration causes cell membrane lysis. The polypeptide is M-zodatoxin-Lt8d (cit 1-4) (Lachesana tarabaevi (Spider)).